We begin with the raw amino-acid sequence, 341 residues long: GTP-binding protein REM 2 (341 aa).

Residues 1–13 (MHTDLDTDMDADT) show a composition bias toward acidic residues. 2 disordered regions span residues 1–72 (MHTD…SMPV) and 84–106 (VDEL…GSGE). The segment covering 18 to 32 (LCSSSSRQASPSGTP) has biased composition (polar residues). At Ser-27 the chain carries Phosphoserine. The segment covering 43–54 (QKPEKLLAELDR) has biased composition (basic and acidic residues). The segment covering 94 to 105 (SSSGSSDSLGSG) has biased composition (low complexity). Residues 122–129 (GESGVGKS), 230–233 (NKSD), and 261–262 (AA) each bind GTP. The disordered stretch occupies residues 282–309 (RGRGHAGGQRPEPSSPDGPAPPTRRESL). Pro residues predominate over residues 294 to 303 (PSSPDGPAPP). Ser-296 carries the phosphoserine modification.

The protein belongs to the small GTPase superfamily. RGK family. Expressed in brain and kidney.

It localises to the cell membrane. Its function is as follows. Binds GTP saturably and exhibits a low intrinsic rate of GTP hydrolysis. The polypeptide is GTP-binding protein REM 2 (Rem2) (Rattus norvegicus (Rat)).